The chain runs to 787 residues: LPS-assembly protein LptD (787 aa).

The first 24 residues, 1-24 (MKKSFPTLLATLVWSALYSQHALA), serve as a signal peptide directing secretion.

It belongs to the LptD family. Component of the lipopolysaccharide transport and assembly complex. Interacts with LptE and LptA.

The protein resides in the cell outer membrane. Its function is as follows. Together with LptE, is involved in the assembly of lipopolysaccharide (LPS) at the surface of the outer membrane. The sequence is that of LPS-assembly protein LptD from Pectobacterium atrosepticum (strain SCRI 1043 / ATCC BAA-672) (Erwinia carotovora subsp. atroseptica).